Here is a 148-residue protein sequence, read N- to C-terminus: UPF0756 membrane protein Ent638_1667 (148 aa).

The next 4 membrane-spanning stretches (helical) occupy residues A14–V34, L51–L71, L86–M106, and V121–V141.

The protein belongs to the UPF0756 family.

The protein localises to the cell membrane. The polypeptide is UPF0756 membrane protein Ent638_1667 (Enterobacter sp. (strain 638)).